A 549-amino-acid chain; its full sequence is O-fucosyltransferase 29 (549 aa).

The helical; Signal-anchor for type II membrane protein transmembrane segment at 43-63 threads the bilayer; it reads TVMWTWVCGFMLFSLGVISLF. The N-linked (GlcNAc...) asparagine glycan is linked to Asn152. Residue 292-294 coordinates substrate; the sequence is HLR. Asn359 and Asn527 each carry an N-linked (GlcNAc...) asparagine glycan. Residues 506-549 are disordered; that stretch reads PFSYDKTSTDDEEEDMSEENHNSTSPGHVHLSSADNERDEVFPD. The segment covering 540–549 has biased composition (basic and acidic residues); that stretch reads DNERDEVFPD.

It belongs to the glycosyltransferase GT106 family.

It is found in the membrane. The protein operates within glycan metabolism. The chain is O-fucosyltransferase 29 from Arabidopsis thaliana (Mouse-ear cress).